The primary structure comprises 1231 residues: MNNQDAVASILHECKQVLDRLLLETPDVSTEDKSEDQRCRASLPSELRTLIQEAEEMKWPFVPEKWQYKQAMSPEDKTNLQDVIGAGLQQLLAALRASILVQDCAAASAIVFLMDRFLYGLDVSGKLLQVAKGLHKLKPATPIAPQVVIRQARVSVNSGKLLKAEYILSSLISNNGATGTWLYRNESDKVLVQSVCIQIRGQILQKLGMWYEAAELIWASVIGYLTLPQPDKKGISTSLGILADIFVSMSKTDYEKFKKSPKVNLALLKEFDHHLLSAAEACKLAAAFSAYTPLFVLRAVNIRGTCLLSYSCSADCPPGMKSVHLCEAKEAFEIGLLTKKDGELVSGKQELHSFIKAAFGLTTVHSRLHGETDAVRAARQLCSEAVGKLYTFSTSPTSQDREGLSQEIMSLISQVKGHLRVQSFPNLDVCSYVPESFKCGLDRLILHGHVDFQQILETYSQHHTSVCEVFESTCGNSKSNQRDTKSEVCITTLKTETNTADTMVATLERVSSQDSRSTASSKMSKKDQGKLQRERGRSWTRSKAFRVSLDLDMETETEPPNHSNGGTDVFNKSLRDNSSSCSWGRLSGLSSSTSWEEVNCAVQDVVRKGSGQEKHPVEAQSSEAVSEEPKRNRSSRAVFLSSKLRGVSLQTTGDDNLESSPSQLHNHTSILPFNAKDTCLASGAGLVETAEGSNNTSLQSSHSCGSDSWSLSSSDRFTDVTTNPSVQEEEPSGIMGDVPESKYDFKDWHGEKNGGTLTEICTGPELTFAPSSVDPEGETAESTDDGLSPSQVALGCLEGSHSMSTRRTFFPDGSVQNADSAKTGCSVRDQTVDPDASTVDEEGQMLDSTEVCSIGQDGAHRPRALRSGQSAEGPKSFVNGSRPSPIFDEDFSTTEEGEELGSMLKSSQNSSSYSPWWLKSPAFSRSSSDGESSWSLLNSSRSSFASLAGQTSQEILEARTLQPDDLEKLLAGVRHDWLLQRLENTGVLKSNQLQQAHSALLLKYSKKSELWTAQETVVYLGDYLKVKKKGKQRNAFWVHYLHQEETLGRYVGKEYKERKGLRHHFTDVERQMTAQHYVTEFNKRLYEQKIPTQIFYVPSTILLILEDRTIKGCISVEPYILGEFVKLSNNTKVVKNEYKATEYGLAYGHFSYEFSNHRDVVVDLQGWVTGNGKGLIYLTDPQIHSVDQKDVTTNFGKRGIFYFFNNQHASCNEICHRLSLTRPSLEQTSKV.

Residues F61, Q67, R116, 150 to 153 (RQAR), D231, K233, 236 to 237 (ST), and F295 each bind ADP-D-glycero-beta-D-manno-heptose. Disordered regions lie at residues 508-540 (ERVS…RSWT), 609-637 (GSGQ…SSRA), 692-739 (GSNN…GDVP), 767-791 (TFAP…SPSQ), 811-843 (PDGS…DEEG), and 859-888 (AHRP…PIFD). Residues 509 to 522 (RVSSQDSRSTASSK) show a composition bias toward polar residues. Residues 524-537 (SKKDQGKLQRERGR) are compositionally biased toward basic and acidic residues. Residues 700–714 (SSHSCGSDSWSLSSS) are compositionally biased toward low complexity. The span at 775–784 (PEGETAESTD) shows a compositional bias: acidic residues. An Alpha-type protein kinase domain is found at 1003 to 1223 (KYSKKSELWT…ICHRLSLTRP (221 aa)).

The protein belongs to the protein kinase superfamily. Alpha-type protein kinase family. ALPK subfamily. Widely expressed. Expressed in the retina and in sweat glands, especially in the myoepithelial cells.

It is found in the cytoplasm. It localises to the cytosol. Its subcellular location is the cytoskeleton. The protein resides in the spindle pole. The protein localises to the microtubule organizing center. It is found in the centrosome. It localises to the cell projection. Its subcellular location is the cilium. It catalyses the reaction L-seryl-[protein] + ATP = O-phospho-L-seryl-[protein] + ADP + H(+). The enzyme catalyses L-threonyl-[protein] + ATP = O-phospho-L-threonyl-[protein] + ADP + H(+). Serine/threonine-protein kinase activity is stimulated upon ADP-D-glycero-beta-D-manno-heptose (ADP-Heptose)-binding. Serine/threonine-protein kinase that detects bacterial pathogen-associated molecular pattern metabolites (PAMPs) and initiates an innate immune response, a critical step for pathogen elimination and engagement of adaptive immunity. Specifically recognizes and binds ADP-D-glycero-beta-D-manno-heptose (ADP-Heptose), a potent PAMP present in all Gram-negative and some Gram-positive bacteria. ADP-Heptose-binding stimulates its kinase activity to phosphorylate and activate TIFA, triggering pro-inflammatory NF-kappa-B signaling. May be involved in monosodium urate monohydrate (MSU)-induced inflammation by mediating phosphorylation of unconventional myosin MYO9A. May also play a role in apical protein transport by mediating phosphorylation of unconventional myosin MYO1A. May play a role in ciliogenesis. This Mus musculus (Mouse) protein is Alpha-protein kinase 1.